The primary structure comprises 732 residues: Anthranilate synthase (732 aa).

The region spanning 533–728 is the Glutamine amidotransferase type-1 domain; the sequence is RVLLVDHDDS…MDRLAAGALT (196 aa). An L-glutamine-binding site is contributed by 583–585; it reads GPG. Cys610 acts as the Nucleophile; for GATase activity in catalysis. L-glutamine contacts are provided by residues Gln614 and 660-661; that span reads SL. Catalysis depends on for GATase activity residues His699 and Glu701.

It catalyses the reaction chorismate + L-glutamine = anthranilate + pyruvate + L-glutamate + H(+). It participates in amino-acid biosynthesis; L-tryptophan biosynthesis; L-tryptophan from chorismate: step 1/5. The sequence is that of Anthranilate synthase (trpE(G)) from Azospirillum brasilense.